Consider the following 65-residue polypeptide: Sperm protamine P1 (65 aa).

Residues 1–65 form a disordered region; the sequence is MARYRHSRSR…RYSRRRRRRY (65 aa).

Belongs to the protamine P1 family. As to expression, testis.

Its subcellular location is the nucleus. It localises to the chromosome. Its function is as follows. Protamines substitute for histones in the chromatin of sperm during the haploid phase of spermatogenesis. They compact sperm DNA into a highly condensed, stable and inactive complex. The polypeptide is Sperm protamine P1 (PRM1) (Lagorchestes hirsutus (Rufous hare-wallaby)).